The following is a 147-amino-acid chain: Deoxyuridine 5'-triphosphate nucleotidohydrolase (147 aa).

Mg(2+) is bound at residue Arg24. DUTP contacts are provided by residues 68-70, 82-85, Tyr88, Gly93, Ile95, and Arg111; these read PRS and GVID.

Belongs to the dUTPase family. Requires Mg(2+) as cofactor.

The enzyme catalyses dUTP + H2O = dUMP + diphosphate + H(+). This enzyme is involved in nucleotide metabolism: it produces dUMP, the immediate precursor of thymidine nucleotides and it decreases the intracellular concentration of dUTP so that uracil cannot be incorporated into DNA. The protein is Deoxyuridine 5'-triphosphate nucleotidohydrolase (OPG046) of Camelus.